A 301-amino-acid chain; its full sequence is F-box protein At4g02733 (301 aa).

Residues 91–146 (NSISWFLPSELTVKVFSMVDTKSLMQASACCTMFNNCAMDPLCYFHIDLTKAFKHV) enclose the F-box domain.

The protein is F-box protein At4g02733 of Arabidopsis thaliana (Mouse-ear cress).